A 149-amino-acid polypeptide reads, in one-letter code: Probable flagellum biosynthesis repressor protein FlbT (149 aa).

It belongs to the FlbT family.

Has a post-transcriptional repressor function in flagellum biogenesis. Associates with the 5'-UTR of fljK mRNA and promotes its degradation. The sequence is that of Probable flagellum biosynthesis repressor protein FlbT from Rhizobium johnstonii (strain DSM 114642 / LMG 32736 / 3841) (Rhizobium leguminosarum bv. viciae).